A 610-amino-acid polypeptide reads, in one-letter code: C4b-binding protein alpha chain (610 aa).

The first 48 residues, 1 to 48, serve as a signal peptide directing secretion; it reads MKHQRVPVMILHSKGTMASWPFSRLWSISDPILFQVTLVATLLATVLG. 8 Sushi domains span residues 49–109, 110–171, 172–236, 237–296, 297–364, 365–427, 428–485, and 486–543; these read SCGI…FCVK, KRCE…QCII, AKCE…SCKK, VICV…TCEL, NGCL…ECKE, VCCP…ECRP, DCKS…QCKA, and LCLK…KCEW. Cystine bridges form between Cys-50-Cys-95, Cys-80-Cys-107, Cys-112-Cys-153, Cys-139-Cys-169, Cys-174-Cys-217, Cys-203-Cys-234, Cys-239-Cys-281, Cys-267-Cys-294, Cys-299-Cys-350, Cys-334-Cys-362, Cys-367-Cys-412, Cys-402-Cys-425, Cys-429-Cys-471, Cys-457-Cys-483, Cys-487-Cys-528, and Cys-514-Cys-541. An N-linked (GlcNAc...) asparagine glycan is attached at Asn-66. An N-linked (GlcNAc...) asparagine glycan is attached at Asn-221. Residues Asn-525 and Asn-602 are each glycosylated (N-linked (GlcNAc...) asparagine).

In terms of assembly, disulfide-linked complex of alpha and beta chains.

It is found in the secreted. Functionally, controls the classical pathway of complement activation. It binds as a cofactor to C3b/C4b inactivator (C3bINA), which then hydrolyzes the complement fragment C4b. It also accelerates the degradation of the C4bC2a complex (C3 convertase) by dissociating the complement fragment C2a. Alpha chain binds C4b. It also interacts with serum amyloid P component. The polypeptide is C4b-binding protein alpha chain (C4BPA) (Bos taurus (Bovine)).